Consider the following 216-residue polypeptide: Protein ORM2 (216 aa).

The tract at residues 1–50 is disordered; the sequence is MIDRTKNESPAFEESPLTPNVSNLKPFPSQSNKISTPVTDHRRRRSSSVI. Over 1-78 the chain is Cytoplasmic; that stretch reads MIDRTKNESP…NMNATWVDQR (78 aa). Phosphoserine is present on residues Ser-9 and Ser-15. A compositionally biased stretch (polar residues) spans 17-38; the sequence is LTPNVSNLKPFPSQSNKISTPV. The residue at position 18 (Thr-18) is a Phosphothreonine. 3 positions are modified to phosphoserine: Ser-22, Ser-29, and Ser-51. Residues 79 to 99 traverse the membrane as a helical segment; the sequence is GAWLIHIVVIVLLRLFYSLFG. The Extracellular segment spans residues 100-103; sequence STPK. A helical membrane pass occupies residues 104-124; it reads WTWTLTNMTYIIGFYIMFHLV. The Cytoplasmic segment spans residues 125–148; sequence KGTPFDFNGGAYDNLTMWEQINDE. A helical transmembrane segment spans residues 149–169; it reads TLYTPTRKFLLIVPIVLFLIS. At 170–177 the chain is on the extracellular side; it reads NQYYRNDM. A helical transmembrane segment spans residues 178 to 198; it reads TLFLSNLAVTVLIGVVPKLGI. Over 199–216 the chain is Cytoplasmic; that stretch reads THRLRISIPGITGRAQIS.

Belongs to the ORM family. As to quaternary structure, component of the SPOTS complex, at least composed of LCB1/2 (LCB1 and/or LCB2), ORM1/2 (ORM1 and/or ORM2), SAC1 and TSC3. In terms of processing, phosphorylated in case of disruption of sphingolipid synthesis. Phosphorylation regulates the inhibitory activity of serine palmitoyltransferases (LCB1 and LCB2).

It localises to the endoplasmic reticulum membrane. Functionally, component of the SPOTS complex that acts as a negative regulator of sphingolipid synthesis. Acts by inhibiting serine palmitoyltransferases (LCB1 and LCB2) activity. Along with ORM1, plays a role in the phosphorylation of LAC1 and YPK1, the distribution of actin patches between mother and daughter cells, and in endocytosis. This Saccharomyces cerevisiae (strain ATCC 204508 / S288c) (Baker's yeast) protein is Protein ORM2 (ORM2).